We begin with the raw amino-acid sequence, 227 residues long: Uridylate kinase (227 aa).

7–11 (KISGK) contacts ATP. Glycine 44 is a binding site for UMP. 2 residues coordinate ATP: glycine 45 and arginine 49. UMP is bound by residues aspartate 66 and 114–120 (FQPGQST). Positions 140, 141, 146, and 149 each coordinate ATP.

It belongs to the UMP kinase family. In terms of assembly, homohexamer.

Its subcellular location is the cytoplasm. It catalyses the reaction UMP + ATP = UDP + ADP. Its pathway is pyrimidine metabolism; CTP biosynthesis via de novo pathway; UDP from UMP (UMPK route): step 1/1. With respect to regulation, unlike most bacteria, is not activated by GTP. UTP acts as a competitive inhibitor against both substrates. High concentration of UMP abolishes the inhibition of UTP at low ATP concentrations, indicating that UTP binds to the acceptor site (UMP site). Its function is as follows. Catalyzes the reversible phosphorylation of UMP to UDP, with ATP as the most efficient phosphate donor. Is also able to phosphorylate dUMP, although much less efficiently. The sequence is that of Uridylate kinase (pyrH) from Saccharolobus solfataricus (strain ATCC 35092 / DSM 1617 / JCM 11322 / P2) (Sulfolobus solfataricus).